A 335-amino-acid chain; its full sequence is HTH-type transcriptional regulator MalR (335 aa).

The HTH lacI-type domain occupies 1–55 (MNIKDIARLSGVGVSTVSRVINNHPDVKQSTREKVLQIIKDSNYIPNNSARILKQ). Residues 3 to 22 (IKDIARLSGVGVSTVSRVIN) constitute a DNA-binding region (H-T-H motif).

In terms of biological role, repressor of glucanotransferase gene expression. The protein is HTH-type transcriptional regulator MalR of Clostridium butyricum.